Reading from the N-terminus, the 689-residue chain is Elongation factor G 1 (689 aa).

The tr-type G domain occupies 7-282 (DQVRTIGIIS…AVVDFLPSPL (276 aa)). Residues 16–23 (SHIDAGKT), 80–84 (DTPGH), and 134–137 (NKMD) contribute to the GTP site.

It belongs to the TRAFAC class translation factor GTPase superfamily. Classic translation factor GTPase family. EF-G/EF-2 subfamily.

It is found in the cytoplasm. Its function is as follows. Catalyzes the GTP-dependent ribosomal translocation step during translation elongation. During this step, the ribosome changes from the pre-translocational (PRE) to the post-translocational (POST) state as the newly formed A-site-bound peptidyl-tRNA and P-site-bound deacylated tRNA move to the P and E sites, respectively. Catalyzes the coordinated movement of the two tRNA molecules, the mRNA and conformational changes in the ribosome. This Geobacter sulfurreducens (strain ATCC 51573 / DSM 12127 / PCA) protein is Elongation factor G 1.